The chain runs to 169 residues: UPF0316 protein Dde_2502 (169 aa).

3 helical membrane passes run 1 to 21 (MITA…LCDV), 38 to 58 (LAFS…SRVI), and 68 to 88 (LAFA…EGVF).

It belongs to the UPF0316 family.

It localises to the cell membrane. This Oleidesulfovibrio alaskensis (strain ATCC BAA-1058 / DSM 17464 / G20) (Desulfovibrio alaskensis) protein is UPF0316 protein Dde_2502.